The following is a 1379-amino-acid chain: DNA-directed RNA polymerase subunit beta (1379 aa).

This sequence belongs to the RNA polymerase beta chain family. As to quaternary structure, the RNAP catalytic core consists of 2 alpha, 1 beta, 1 beta' and 1 omega subunit. When a sigma factor is associated with the core the holoenzyme is formed, which can initiate transcription.

The catalysed reaction is RNA(n) + a ribonucleoside 5'-triphosphate = RNA(n+1) + diphosphate. Functionally, DNA-dependent RNA polymerase catalyzes the transcription of DNA into RNA using the four ribonucleoside triphosphates as substrates. The chain is DNA-directed RNA polymerase subunit beta from Allorhizobium ampelinum (strain ATCC BAA-846 / DSM 112012 / S4) (Agrobacterium vitis (strain S4)).